A 434-amino-acid polypeptide reads, in one-letter code: Histidine--tRNA ligase (434 aa).

It belongs to the class-II aminoacyl-tRNA synthetase family. Homodimer.

The protein resides in the cytoplasm. The enzyme catalyses tRNA(His) + L-histidine + ATP = L-histidyl-tRNA(His) + AMP + diphosphate + H(+). The protein is Histidine--tRNA ligase of Latilactobacillus sakei subsp. sakei (strain 23K) (Lactobacillus sakei subsp. sakei).